Reading from the N-terminus, the 612-residue chain is Dihydroxy-acid dehydratase (612 aa).

D81 is a binding site for Mg(2+). Residue C122 coordinates [2Fe-2S] cluster. Residues D123 and K124 each contribute to the Mg(2+) site. K124 is modified (N6-carboxylysine). C193 is a [2Fe-2S] cluster binding site. Mg(2+) is bound at residue E489. S515 functions as the Proton acceptor in the catalytic mechanism.

This sequence belongs to the IlvD/Edd family. In terms of assembly, homodimer. Requires [2Fe-2S] cluster as cofactor. It depends on Mg(2+) as a cofactor.

It carries out the reaction (2R)-2,3-dihydroxy-3-methylbutanoate = 3-methyl-2-oxobutanoate + H2O. The catalysed reaction is (2R,3R)-2,3-dihydroxy-3-methylpentanoate = (S)-3-methyl-2-oxopentanoate + H2O. Its pathway is amino-acid biosynthesis; L-isoleucine biosynthesis; L-isoleucine from 2-oxobutanoate: step 3/4. It functions in the pathway amino-acid biosynthesis; L-valine biosynthesis; L-valine from pyruvate: step 3/4. Functions in the biosynthesis of branched-chain amino acids. Catalyzes the dehydration of (2R,3R)-2,3-dihydroxy-3-methylpentanoate (2,3-dihydroxy-3-methylvalerate) into 2-oxo-3-methylpentanoate (2-oxo-3-methylvalerate) and of (2R)-2,3-dihydroxy-3-methylbutanoate (2,3-dihydroxyisovalerate) into 2-oxo-3-methylbutanoate (2-oxoisovalerate), the penultimate precursor to L-isoleucine and L-valine, respectively. In Xanthomonas campestris pv. campestris (strain B100), this protein is Dihydroxy-acid dehydratase.